The chain runs to 497 residues: Interferon regulatory factor 5 (497 aa).

Positions P12 to K18 match the Nuclear localization signal motif. Positions R14–S122 form a DNA-binding region, IRF tryptophan pentad repeat. Residues G124–T178 are disordered. The segment covering V137–E148 has biased composition (acidic residues). Residues L149 to T159 carry the Nuclear export signal motif. A Phosphoserine; by TBK1 modification is found at S157. At S300 the chain carries Phosphoserine. Residues K410 and K411 each participate in a glycyl lysine isopeptide (Lys-Gly) (interchain with G-Cter in ubiquitin) cross-link. S430 is modified (phosphoserine). Position 434 is a phosphoserine; by IKKB (S434). 2 positions are modified to phosphoserine: S436 and S439. The residue at position 445 (S445) is a Phosphoserine; by IKKB.

It belongs to the IRF family. Homodimer, when phosphorylated. Interacts with TASL (via pLxIS motif); interaction takes place downstream of TLR7, TLR8 or TLR9, leading to its activation. Interacts with MYD88 and TRAF6. Phosphorylation of serine and threonine residues by IKBKB in a C-terminal autoinhibitory region, stimulates dimerization, transport into the nucleus, assembly with the coactivator CBP/EP300 and initiation of transcription. In terms of processing, 'Lys-63'-linked polyubiquitination by TRAF6 is required for activation.

The protein localises to the cytoplasm. Its subcellular location is the nucleus. With respect to regulation, maintained as a monomer in an autoinhibited state. Phosphorylation and activation follow the following steps: innate adapter protein TASL recruits IRF5, thereby licensing IRF5 for phosphorylation by IKBKB. Phosphorylated IRF5 dissociates from the adapter proteins, dimerizes, and then enters the nucleus to induce IFNs. In terms of biological role, transcription factor that plays a critical role in innate immunity by activating expression of type I interferon (IFN) IFNA and INFB and inflammatory cytokines downstream of endolysosomal toll-like receptors TLR7, TLR8 and TLR9. Regulates the transcription of type I IFN genes (IFN-alpha and IFN-beta) and IFN-stimulated genes (ISG) by binding to an interferon-stimulated response element (ISRE) in their promoters. Can efficiently activate both the IFN-beta (IFNB) and the IFN-alpha (IFNA) genes and mediate their induction downstream of the TLR-activated, MyD88-dependent pathway. The protein is Interferon regulatory factor 5 of Mus musculus (Mouse).